A 622-amino-acid polypeptide reads, in one-letter code: Probable Xaa-Pro aminopeptidase P (622 aa).

Mn(2+)-binding residues include Asp-419, Asp-430, Glu-528, and Glu-542.

The protein belongs to the peptidase M24B family. The cofactor is Mn(2+).

The catalysed reaction is Release of any N-terminal amino acid, including proline, that is linked to proline, even from a dipeptide or tripeptide.. Functionally, catalyzes the removal of a penultimate prolyl residue from the N-termini of peptides. The polypeptide is Probable Xaa-Pro aminopeptidase P (AMPP) (Coprinopsis cinerea (strain Okayama-7 / 130 / ATCC MYA-4618 / FGSC 9003) (Inky cap fungus)).